A 33-amino-acid polypeptide reads, in one-letter code: Photosystem II reaction center protein Psb30 (33 aa).

A helical membrane pass occupies residues 5–25 (IVFQLTALLFVVAAGPLVIVL).

It belongs to the Psb30/Ycf12 family. In terms of assembly, PSII is composed of 1 copy each of membrane proteins PsbA, PsbB, PsbC, PsbD, PsbE, PsbF, PsbH, PsbI, PsbJ, PsbK, PsbL, PsbM, PsbT, PsbX, PsbY, PsbZ, Psb30/Ycf12, peripheral proteins of the oxygen-evolving complex and a large number of cofactors. It forms dimeric complexes.

The protein localises to the plastid. Its subcellular location is the chloroplast thylakoid membrane. Its function is as follows. A core subunit of photosystem II (PSII), probably helps stabilize the reaction center. This is Photosystem II reaction center protein Psb30 from Chlorella vulgaris (Green alga).